Consider the following 672-residue polypeptide: Peptidoglycan D,D-transpeptidase MrdA (672 aa).

Residues 21-41 traverse the membrane as a helical segment; it reads IFFAVGLVIICLLVLASRYAY. S326 serves as the catalytic Acyl-ester intermediate. The Zn(2+) site is built by D350, D365, H371, and C384. Positions 616 to 672 are disordered; sequence ANHQVNGGLMTAGIKPGELPSGNESASSTPATSAPTSAAASTPQATPTRPATNEVDE. A compositionally biased stretch (low complexity) spans 640-672; it reads SASSTPATSAPTSAAASTPQATPTRPATNEVDE.

This sequence belongs to the transpeptidase family. MrdA subfamily. In terms of assembly, monomer. The cofactor is Zn(2+).

It is found in the cell inner membrane. It catalyses the reaction Preferential cleavage: (Ac)2-L-Lys-D-Ala-|-D-Ala. Also transpeptidation of peptidyl-alanyl moieties that are N-acyl substituents of D-alanine.. It participates in cell wall biogenesis; peptidoglycan biosynthesis. With respect to regulation, inhibited by the beta-lactams sulbactam and piperacillin-tazobactam. Catalyzes cross-linking of the peptidoglycan cell wall. Involved in the determination of the rod shape of the cell. The protein is Peptidoglycan D,D-transpeptidase MrdA of Acinetobacter baumannii (strain ATCC 19606 / DSM 30007 / JCM 6841 / CCUG 19606 / CIP 70.34 / NBRC 109757 / NCIMB 12457 / NCTC 12156 / 81).